Here is a 347-residue protein sequence, read N- to C-terminus: Probable dual-specificity RNA methyltransferase RlmN (347 aa).

Glutamate 93 serves as the catalytic Proton acceptor. The Radical SAM core domain maps to lysine 100–arginine 323. The cysteines at positions 107 and 334 are disulfide-linked. [4Fe-4S] cluster contacts are provided by cysteine 114, cysteine 118, and cysteine 121. Residues glycine 160–glutamate 161, serine 192, serine 215–threonine 217, and asparagine 291 each bind S-adenosyl-L-methionine. Cysteine 334 acts as the S-methylcysteine intermediate in catalysis.

This sequence belongs to the radical SAM superfamily. RlmN family. Requires [4Fe-4S] cluster as cofactor.

Its subcellular location is the cytoplasm. The enzyme catalyses adenosine(2503) in 23S rRNA + 2 reduced [2Fe-2S]-[ferredoxin] + 2 S-adenosyl-L-methionine = 2-methyladenosine(2503) in 23S rRNA + 5'-deoxyadenosine + L-methionine + 2 oxidized [2Fe-2S]-[ferredoxin] + S-adenosyl-L-homocysteine. It carries out the reaction adenosine(37) in tRNA + 2 reduced [2Fe-2S]-[ferredoxin] + 2 S-adenosyl-L-methionine = 2-methyladenosine(37) in tRNA + 5'-deoxyadenosine + L-methionine + 2 oxidized [2Fe-2S]-[ferredoxin] + S-adenosyl-L-homocysteine. Specifically methylates position 2 of adenine 2503 in 23S rRNA and position 2 of adenine 37 in tRNAs. The sequence is that of Probable dual-specificity RNA methyltransferase RlmN from Treponema denticola (strain ATCC 35405 / DSM 14222 / CIP 103919 / JCM 8153 / KCTC 15104).